A 780-amino-acid chain; its full sequence is Dynamin-related protein 3B (780 aa).

At Ser-2 the chain carries N-acetylserine. The region spanning 40–315 (TIALPQVAVV…LVQHIKALLP (276 aa)) is the Dynamin-type G domain. The tract at residues 50-57 (GSQSSGKS) is G1 motif. GTP is bound at residue 50–57 (GSQSSGKS). Positions 76–78 (CTR) are G2 motif. The interval 157-160 (DLPG) is G3 motif. GTP contacts are provided by residues 157–161 (DLPGI) and 226–229 (TKLD). Residues 226–229 (TKLD) are G4 motif. Residues 256-259 (VNRS) form a G5 motif region. Disordered stretches follow at residues 536 to 558 (PVAR…QIKT) and 573 to 592 (QAVP…STSW). Positions 539 to 548 (RPRDTVEPER) are enriched in basic and acidic residues. Positions 549-558 (TASSGSQIKT) are enriched in polar residues. The GED domain occupies 654 to 745 (IEITKLLLKS…TLDELPLEAE (92 aa)). Over residues 753 to 770 (IGSEAKHEELPGTRRSRT) the composition is skewed to basic and acidic residues. Residues 753–780 (IGSEAKHEELPGTRRSRTETNGNGRLHM) form a disordered region. Positions 771-780 (ETNGNGRLHM) are enriched in polar residues.

It belongs to the TRAFAC class dynamin-like GTPase superfamily. Dynamin/Fzo/YdjA family. As to quaternary structure, interacts with ARC5 on peroxisomes and ELM1 on mitochondria.

Its subcellular location is the mitochondrion. The protein localises to the peroxisome. Involved in the control of mitochondrial and peroxisomal division and morphology. This chain is Dynamin-related protein 3B (DRP3B), found in Arabidopsis thaliana (Mouse-ear cress).